Here is an 88-residue protein sequence, read N- to C-terminus: MAEAEKTVRTLTGRVVSDKMDKTITVLIERRVKHPIYGKYVKRSTKLHAHDESNQCKIGDKVSIRETRPLAKTKSWALVEVLERAVEV.

It belongs to the universal ribosomal protein uS17 family. Part of the 30S ribosomal subunit.

Functionally, one of the primary rRNA binding proteins, it binds specifically to the 5'-end of 16S ribosomal RNA. The protein is Small ribosomal subunit protein uS17 of Pseudomonas entomophila (strain L48).